Here is a 497-residue protein sequence, read N- to C-terminus: Serine hydroxymethyltransferase (497 aa).

(6S)-5,6,7,8-tetrahydrofolate contacts are provided by residues leucine 176 and 180–182; that span reads GHL. Lysine 289 carries the post-translational modification N6-(pyridoxal phosphate)lysine.

This sequence belongs to the SHMT family. Homodimer. The cofactor is pyridoxal 5'-phosphate.

It is found in the cytoplasm. It carries out the reaction (6R)-5,10-methylene-5,6,7,8-tetrahydrofolate + glycine + H2O = (6S)-5,6,7,8-tetrahydrofolate + L-serine. It participates in one-carbon metabolism; tetrahydrofolate interconversion. It functions in the pathway amino-acid biosynthesis; glycine biosynthesis; glycine from L-serine: step 1/1. Catalyzes the reversible interconversion of serine and glycine with tetrahydrofolate (THF) serving as the one-carbon carrier. This reaction serves as the major source of one-carbon groups required for the biosynthesis of purines, thymidylate, methionine, and other important biomolecules. Also exhibits THF-independent aldolase activity toward beta-hydroxyamino acids, producing glycine and aldehydes, via a retro-aldol mechanism. In Chlamydia abortus (strain DSM 27085 / S26/3) (Chlamydophila abortus), this protein is Serine hydroxymethyltransferase.